A 425-amino-acid chain; its full sequence is Dihydroorotase (425 aa).

Residues H59 and H61 each coordinate Zn(2+). Substrate-binding positions include 61–63 (HLR) and N93. Zn(2+) contacts are provided by D151, H178, and H231. N277 contacts substrate. Position 304 (D304) interacts with Zn(2+). D304 is an active-site residue. Residues H308 and 322 to 323 (FG) each bind substrate.

This sequence belongs to the metallo-dependent hydrolases superfamily. DHOase family. Class I DHOase subfamily. Zn(2+) serves as cofactor.

The catalysed reaction is (S)-dihydroorotate + H2O = N-carbamoyl-L-aspartate + H(+). It functions in the pathway pyrimidine metabolism; UMP biosynthesis via de novo pathway; (S)-dihydroorotate from bicarbonate: step 3/3. Functionally, catalyzes the reversible cyclization of carbamoyl aspartate to dihydroorotate. The protein is Dihydroorotase of Staphylococcus epidermidis (strain ATCC 35984 / DSM 28319 / BCRC 17069 / CCUG 31568 / BM 3577 / RP62A).